Consider the following 475-residue polypeptide: Ribulose bisphosphate carboxylase large chain (475 aa).

The propeptide occupies 1-2 (MS). Pro3 is modified (N-acetylproline). An N6,N6,N6-trimethyllysine modification is found at Lys14. The substrate site is built by Asn123 and Thr173. Lys175 functions as the Proton acceptor in the catalytic mechanism. Lys177 contacts substrate. Positions 201, 203, and 204 each coordinate Mg(2+). Lys201 carries the post-translational modification N6-carboxylysine. His294 serves as the catalytic Proton acceptor. 3 residues coordinate substrate: Arg295, His327, and Ser379.

It belongs to the RuBisCO large chain family. Type I subfamily. Heterohexadecamer of 8 large chains and 8 small chains. Requires Mg(2+) as cofactor.

Its subcellular location is the plastid. The protein localises to the chloroplast. The enzyme catalyses 2 (2R)-3-phosphoglycerate + 2 H(+) = D-ribulose 1,5-bisphosphate + CO2 + H2O. It catalyses the reaction D-ribulose 1,5-bisphosphate + O2 = 2-phosphoglycolate + (2R)-3-phosphoglycerate + 2 H(+). Functionally, ruBisCO catalyzes two reactions: the carboxylation of D-ribulose 1,5-bisphosphate, the primary event in carbon dioxide fixation, as well as the oxidative fragmentation of the pentose substrate in the photorespiration process. Both reactions occur simultaneously and in competition at the same active site. The protein is Ribulose bisphosphate carboxylase large chain of Nymphaea alba (White water-lily).